Reading from the N-terminus, the 551-residue chain is MADGVDHIDIYADVGEEFNQEAEYGGHDQIDLYDDVISPSANNGDAPEDRDYMDTLPPTVGDDVGKGAAPNVVYTYTGKRIALYIGNLTWWTTDEDLTEAVHSLGVNDILEIKFFENRANGQSKGFALVGVGSEASSKKLMDLLPKRELHGQNPVVTPCNKQFLSQFEMQSRKTTQSGQMSGEGKAGPPGGSSRAAFPQGGRGRGRFPGAVPGGDRFPGPAGPGGPPPPFPAGQTPPRPPLGPPGPPGPPGPPPPGQVLPPPLAGPPNRGDRPPPPVLFPGQPFGQPPLGPLPPGPPPPVPGYGPPPGPPPPQQGPPPPPGPFPPRPPGPLGPPLTLAPPPHLPGPPPGAPPPAPHVNPAFFPPPTNSGMPTSDSRGPPPTDPYGRPPPYDRGDYGPPGREMDTARTPLSEAEFEEIMNRNRAISSSAISRAVSDASAGDYGSAIETLVTAISLIKQSKVSADDRCKVLISSLQDCLHGIESKSYGSGSRRERSRERDHSRSREKSRRHKSRSRDRHDDYYRERSRERERHRDRDRDRDRERDREREYRHR.

Residues 1 to 213 (MADGVDHIDI…RGRFPGAVPG (213 aa)) are necessary for interaction with NXF1. The region spanning 81–161 (IALYIGNLTW…QNPVVTPCNK (81 aa)) is the RRM domain. Positions 81 to 161 (IALYIGNLTW…QNPVVTPCNK (81 aa)) are necessary for interaction with NUDT21/CPSF5. The segment at 81-161 (IALYIGNLTW…QNPVVTPCNK (81 aa)) is necessary for nuclear paraspeckles localization. T157 is subject to Phosphothreonine. The span at 169–180 (MQSRKTTQSGQM) shows a compositional bias: polar residues. Disordered stretches follow at residues 169–411 (MQSR…PLSE) and 477–551 (LHGI…YRHR). A GAR motif is present at residues 202–206 (RGRGR). Positions 207 to 219 (FPGAVPGGDRFPG) are enriched in low complexity. Composition is skewed to pro residues over residues 220–265 (PAGP…PLAG), 285–366 (GQPP…PPPT), and 377–388 (GPPPTDPYGRPP). The (Microbial infection) Binds to HIV-1 capsid protein p24 (CA) stretch occupies residues 358-551 (NPAFFPPPTN…RDREREYRHR (194 aa)). Over residues 389 to 404 (PYDRGDYGPPGREMDT) the composition is skewed to basic and acidic residues. T404 and T407 each carry phosphothreonine. The tract at residues 404 to 551 (TARTPLSEAE…RDREREYRHR (148 aa)) is sufficient for nuclear speckle localization. The segment at 405–551 (ARTPLSEAEF…RDREREYRHR (147 aa)) is necessary for RNA-binding. Residues 481–551 (ESKSYGSGSR…RDREREYRHR (71 aa)) form a necessary for interaction with SRSF3, SRSF7 and TRA2B/SFRS10 region. Over residues 489–503 (SRRERSRERDHSRSR) the composition is skewed to basic and acidic residues. The interval 490–551 (RRERSRERDH…RDREREYRHR (62 aa)) is arg/Ser-rich domain. Residues S494, S500, S511, S513, and S525 each carry the phosphoserine modification. Residues 504–514 (EKSRRHKSRSR) show a composition bias toward basic residues. The segment at 510–551 (KSRSRDRHDDYYRERSRERERHRDRDRDRDRERDREREYRHR) is sufficient for nuclear targeting. Positions 515 to 551 (DRHDDYYRERSRERERHRDRDRDRDRERDREREYRHR) are enriched in basic and acidic residues.

Belongs to the RRM CPSF6/7 family. In terms of assembly, component of the cleavage factor Im (CFIm) complex which is a heterotetramer composed of two subunits of NUDT21/CPSF5 and two subunits of CPSF6 or CPSF7 or a heterodimer of CPSF6 and CPSF7. The cleavage factor Im (CFIm) complex associates with the CPSF and CSTF complexes to promote the assembly of the core mRNA 3'-processing machinery. Associates with the exon junction complex (EJC). Associates with the 80S ribosome particle. Interacts (via the RRM domain) with NUDT21/CPSF5; this interaction is direct and enhances binding to RNA. Interacts (via Arg/Ser-rich domain) with FIP1L1 (preferentially via unphosphorylated form and Arg/Glu/Asp-rich domain); this interaction mediates, at least in part, the interaction between the CFIm and CPSF complexes and may be inhibited by CPSF6 hyper-phosphorylation. Interacts (via N-terminus) with NXF1; this interaction is direct. Interacts with SRSF3. Interacts with SRSF7. Interacts with SNRNP70. Interacts with TRA2B/SFRS10. Interacts with UPF1. Interacts with UPF3B. Interacts with VIRMA. Interacts (via Arg/Ser-rich domain) with TNPO3; promoting nuclear import of CPSF6 independently of its phosphorylation status. Interacts with YTHDC1. As to quaternary structure, (Microbial infection) Interacts (via C-terminus) with HIV-1 capsid protein p24 (CA). In terms of processing, phosphorylated. Phosphorylated in the Arg/Ser-rich domain by SRPK1, in vitro. Symmetrically dimethylated on arginine residues in the GAR motif by PRMT5 in a WDR77- and CLNS1A-dependent manner. Asymmetrically dimethylated on arginine residues in the GAR motif by PRMT1.

The protein localises to the nucleus. It localises to the nucleoplasm. The protein resides in the nucleus speckle. It is found in the cytoplasm. In terms of biological role, component of the cleavage factor Im (CFIm) complex that functions as an activator of the pre-mRNA 3'-end cleavage and polyadenylation processing required for the maturation of pre-mRNA into functional mRNAs. CFIm contributes to the recruitment of multiprotein complexes on specific sequences on the pre-mRNA 3'-end, so called cleavage and polyadenylation signals (pA signals). Most pre-mRNAs contain multiple pA signals, resulting in alternative cleavage and polyadenylation (APA) producing mRNAs with variable 3'-end formation. The CFIm complex acts as a key regulator of cleavage and polyadenylation site choice during APA through its binding to 5'-UGUA-3' elements localized in the 3'-untranslated region (UTR) for a huge number of pre-mRNAs. CPSF6 enhances NUDT21/CPSF5 binding to 5'-UGUA-3' elements localized upstream of pA signals and promotes RNA looping, and hence activates directly the mRNA 3'-processing machinery. Plays a role in mRNA export. (Microbial infection) Binds HIV-1 capsid-nucleocapsid (HIV-1 CA-NC) complexes and might thereby promote the integration of the virus in the nucleus of dividing cells (in vitro). The chain is Cleavage and polyadenylation specificity factor subunit 6 from Homo sapiens (Human).